The following is a 304-amino-acid chain: Cbb3-type cytochrome c oxidase subunit CcoP (304 aa).

Transmembrane regions (helical) follow at residues 11–31 (LYVA…LIVA) and 61–81 (WWAG…ALYP). Cytochrome c domains follow at residues 129–209 (QAMA…LSLS) and 216–296 (VAAQ…WSLS). The heme c site is built by cysteine 142, cysteine 145, histidine 146, methionine 185, cysteine 228, cysteine 231, histidine 232, and methionine 273.

It belongs to the CcoP / FixP family. Component of the cbb3-type cytochrome c oxidase at least composed of CcoN, CcoO, CcoQ and CcoP. Requires heme c as cofactor.

Its subcellular location is the cell inner membrane. It functions in the pathway energy metabolism; oxidative phosphorylation. Its function is as follows. C-type cytochrome. Part of the cbb3-type cytochrome c oxidase complex. CcoP subunit is required for transferring electrons from donor cytochrome c via its heme groups to CcoO subunit. From there, electrons are shuttled to the catalytic binuclear center of CcoN subunit where oxygen reduction takes place. The complex also functions as a proton pump. The polypeptide is Cbb3-type cytochrome c oxidase subunit CcoP (Rubrivivax gelatinosus (Rhodocyclus gelatinosus)).